Consider the following 591-residue polypeptide: Vomeromodulin (591 aa).

Residues 1–18 (MWVLQALAIMLSIQAGTL) form the signal peptide. The interval 151–172 (NEGNGDSSKPSSGSKATGGLGQ) is disordered. N-linked (GlcNAc...) asparagine glycosylation is found at asparagine 421 and asparagine 516.

In terms of processing, N-glycosylated. The N-glycans consist mainly of complex sialylated and fucosylated biantennary structures. Expressed in lung. Not detected in other tissues tested (at protein level).

The protein localises to the secreted. The protein is Vomeromodulin of Mus musculus (Mouse).